The following is a 303-amino-acid chain: Sulfotransferase 6B1 (303 aa).

Lys-65–Trp-70 is a 3'-phosphoadenylyl sulfate binding site. The Proton acceptor role is filled by His-118. 3'-phosphoadenylyl sulfate-binding positions include Arg-140, Ser-148, Tyr-203, Ser-237–Met-242, and Arg-259–Gly-261.

The protein belongs to the sulfotransferase 1 family.

The protein localises to the cytoplasm. It localises to the cytosol. The catalysed reaction is thyroxine + 3'-phosphoadenylyl sulfate = thyroxine sulfate + adenosine 3',5'-bisphosphate + H(+). Sulfotransferase that utilizes 3'-phospho-5'-adenylyl sulfate (PAPS) as sulfonate donor to catalyze the sulfate conjugation of thyroxine. Involved in the metabolism of thyroxine. This chain is Sulfotransferase 6B1 (SULT6B1), found in Pan troglodytes (Chimpanzee).